Here is a 4760-residue protein sequence, read N- to C-terminus: MKHLASSENMPTPAQDRAPSPSAMQQEIVDMCAQVLGRPITRMRTSKSFVALGGDSLLAIKLMAHCREAGYTISIAKILQTASIEELSRSAECQLISSSGEGPVPDPNRPGEPIATSLSLLNNELVLDQVRNITAEPLEDIQDIFPCSRTQEVFLISQHANPEMYQCVVVAEIKCMKPGLSLNDDRLQNAWICVAQRHPALRTVFIESIQRPGHFDQVIMKHEAVPLECQLSSAQCEESAEGMFSRRVSISKEKGTTGRATILRRSENSAVFRLEVSHALMDGQSFGIIFHDFAQAYLQNELPSPTAFSYDSFVAYQEEIDRESVRAYWSSHLAGAQPTRFPTNGNRKLEDLKTLRFRIELDAAALQKVCLEYDATSANLCQVAWAVVLGSYTGSKDVCFSYVNSGRHAPLSSIENAVGAFVDVMVCRMKLPETAKISQMLSKAKQDVIQGLSHPGSLLFEEKKHGHGVSDLRGNTIITFQMGVRDEESAGSDLQIVMLDEITASDYDISLNIQPCHGGLDIRLDYWLSRIDQEIIESVAESFQTALACMCSDDIPLRDVNVVCTQEIEQLRRRNSYTATEIGSLLHDKVDEQARLCPDALAVQGWDGELTYRALNEEASKLASYLQHLGAQQDILICTCFEKSKWAAISQLAVLKSGAAVVPLGTNQPMKRLEMMITNTGADIVLTTSNFASRFVTLFKHVVVIDGASMAKLPLAATVSCSATPDSLAYVIFTSGSTGVPKGVMLTHDSVSTSLRHSVERLNPGPDTRMLQFSAYTFDAAIYEFFFTWHIGACVCIVSEHDRINRLEPAMGELNVNWALLTPTMAEMISPGQVPSLKHLMLIGEAIKPGVLHRWIDHVELWNGYGPSECSIISSCKLLTRECNTTNIGFPITGAFWVVDATNPDRLAPTGAIGELLIQGSHLARGYLNDEQKTSQAFVPPPAWVSKYAFSGSTRYYRTGDLVQRNKDGSITFVGRRDTQVKLRGQRVEFEDIEQHLKDHDAVVEAAIVLAADGPCQGQLVAVVALEAFISQEMHPKTLSPVDQQQIARAKLQTAILGDWLSDRVPEYMVPTMWIPVTSRLLQTDSGKLDRVRLGRCVDSVDVSWVEAFASAGEELTQEREATTLQLQIRDIWAEILLLSIPQVPINRRSFLSLGGDSILAMKAVSRARTQGITLTVPDILQSKSIAKLTEKLGVPEENFLSYTSASKPFPLSPTQKWYFDRVHPLGSGIRHGYCRSVCLQANQKLAEKHVSTSFSTLVSMHPMLRARFLADAANGWQQQVVGHSDDAYGFAVSHLNGFEEIHDIAESTEQGLNIENGPVFSVQFMHLHAGKEEGKQLLFITGHHLVMDEISLCIIIEDLERLLYQDSTVALVVERPSFQAWVEGIAKTTKEEGPEPTSASLTPGLKPLMSKLDLEFGSLTSNEPVYDETNTKVLQFDEFDTMVLLGNANQALRTEPVELILAALVMSFTTTFPSQCIPVLLEGSRGRSLNHGSIDNSKTVGCFTTTMPLRFPVANMDDAVKSTKQIKNARRNTKFRRLHDSQNRNARNYETISSLNRETMEIFFNFDDSSQQIQEQSTLFKQQLLPRRQKLSTGVQKTRHSEIDVDATILQSRLHVAFHFNHRMNHGSDVERWSCEFPKTLRALVATLLKTPSMLTLSDFPLVELTDQKLKILEGQTLPRVGVQPENVEDMYPCTPMQNGILMSQARSPGMYQTQVVWQLQSPDSRINLDVERIMHAYQTLTDRHPMLRTIFVPRTSNAGDGAFDQIVIRRYRINVVHQVCEQDSVEALLATMTNPSAVDYGDGPNHKFMVYSTPSNLTYGHLVINHALSDGFSLSLLEKELTEAYEGTLTPDSKAPPYSAYLSFLKQRSTKEALQYWINNLESAEACFLPAMVERKIQNESETDIVSLPAPSRRQSTTASLEGVESLRKFSEKHSVTMANVFQLAWALVLSKFVRSDDVLFGYVSSGRDVPVHEAHQIFGPFVNILVSRIKLDWDSSIAESLQSVQKRFFENLGQQRTPLVDIWHALKTGGRGLFNTYLSYRQLSSADGQRSGLFQHTIAILGDSEYDAGVDIVASSNKVSVTLDYLPSFMGHDAATRIVDCLLQTVQSLTQSEAFLLRNVTTTTGQDIRQICQWNSEVPLVTVQHCVHDTVYSKCCLDPSAKAICAWDGDLTYFELDQLGEQLAFYLTSNLSVTPETMIGVCFDKSRWAIVAQLAILKSGGAIVPINPMEPMQRLETILRESGICTLLTTSCYGDRFLEIIPNVVAVDSNSPFFHGAMPTERVHSTANPDNAAVVIHTSGSTGNPKGVVLTHRSIASSLEAQGKIFGLSSRTRTLQFVSYTFDLSIGDIWGTLSHGGCVCVMSEDDRMNNIQGAIQIYGATLVIMTPTVATLLDVSKLPSLETLVLGGEALKPAFVEKHLEARQIKIFNGYGPSECSMITTCNGPIQHKNEAPKIGRPLLGSVWLVDDTDKICPIGAVGEIWVEGPLVARGYLNKKDLTDKGFPVDPPWAASAGLQGKRFYRTGDMARQNAKGDLFYVDRKDWQIKIRGNRVELSEIEHAIKEILSGLQNVAACLVSSNQRGPLIAAVLEQNCDTLGLQADVAGFHFERLSPGFQKELVLLKKALAGVLPSHMIPNLYVPTTRLPLTASGKVNRQALRQSLESFSEQEALHYTLADAAKTLPSSETEKTVRALWAAVLQHELDQVGVEDNFFHLGGDSYLAMRLVASSQADDSRVHFTVSDVLQHPTIRELAHAIDQRSTHSRASDRETARFSLWKEYQELNKSQESGHAKALLDQIAAQCDVPIDDVEDIYPCTPLQEGLMVVTAQQPRAYIARWAFQMPDNINLERFQGAWQTLSRAVPILRTRIVPGRLSGALQVVVRGDCKWHTSHDLDQYLSDDVAQSMAYGTSLIRLAYINHSNGCRDFVWTAHHSIYDGWSLPMLLEALSRIYLFNEVPESFPPYSNFIQYIQAQDLAEATAFWRSELQGNLGEPFPALPKPSYQPEPARIIRCTINVESVNRLVTLASLLRAAWAATVSSHTGGTALFAMPLSGRNAPVKGILDMMAPTVTTVPVRIQVDEKQAVHDYLAAVQQQASNMVPFEHSGLHHVRSMVGRDINPQHLFAIQSAPPGKATFEELLGMKELTLPMDGFDNYALIVECFINSREGASIEILARFDDNVLSHTQVQHLLSRFKHIFGQLSQVSAGNNDNTSSMLMGGLEYISPEEVAQLAILNREVAADAPCLVHDLVLRYSATTPDRPAVCAWDGEMSFQQLDQLSEALANRLVELGVTIESPVMICCDKSKWAVVGILAILRAGGTVVPVRAAPVARLQAIMEATGSRVVVTMSEFISQLQGIADHVVSMDSVPVTKPEIPQGPVKQHPSTKSVSFIMFTSGSTGSPKGIVLEHGSMSIAIQSHVKRFGVNRHTRGFQFASFTFDMSLHDILTPLAGGGCVCLPSEVERVNNLAHAMRRFRVNYSMLTPRVLHTIKPSECPEIRTLLVGGERCDTEQLKLWLPQAKVWHVYGPVECSIISTAAEFTGSDTLSLGLALVGAVWVTNKDNCNQLCPIGAVGELLVEGPLVARGYLRDEAKTSAVFIDYPPWRKQHGLAPNSQSQRMYRTGDLVVQHEDGSLIFVGRADQQLKIRGQRVEVGDIEHHIGLQPEVEDGVVLYPQNGPCRSQLIGLVTLHEHMSATDLSEVQPSSADDLAKAITQTEIIRSRLSDVLPDYMVPNVWISMACLPQSAHHKVDRRKLMDWVQSLDAEYFRRITGAKQEAPEKPTTRTEELMQSVLADVLGLSPEDVSMGRSFLSMGGDSITSMQVVSQCRSRYGLSLHVRDILQSKSITQLAQRATTDAAIAPLLPASDGEFRLSPIQRLFFRSFAARGLQSEDEFRFNQSVCLTVNKHIDTEQIKHAARGVVSAHPMLRARFTVSGKRWRQRIEDDVDASCHVVFHQVENQAELEDVIWAGQRSLSVEQGRVFSVHCIETTTTGSQLLFLVAHHLVVDIVSWQIILRDLDNLIQHPKLTAPVESTTFQHWLQLQASRAQNVGSPHQLVHAQMPIADWSYWGVTPENNTYGHRINEQFILEDCASVLFGDKQPLRSEPVEVLLAALFHSFHQIFPDRAVPTVFNEGHGREPWSDAIDLSNTVGWFTTMTPIHVPVGTSDVVDVLKRTKDLRRSIPERGFAYFTSRFLTRDGQHAFASHDQPEVMFNFGGRYRDDKHSRSLFRMSNEFNSSHISGIGNNVKRIAVFEVEASIQQENLAVTLGFSKNMQNPERITRWIQAYQDSLKTLLCQLSTLPTFLSLADVPLLNITYDDLDRLQSERLPLVGINDIDCIEDIYPCSPAQESILRSQARDSSTFHVRSACEFRAREAVVNPEALIRAWQTVVARHAILRTVCVPPTCDGESFYQAVLKQYEPQVSTVRCETAEDVDEAFKDEGGLRYPKWKPEHQLTLCLTSTGQVFFRLLINHTLVDVSSLQLIMNEVTLAYEDGILDTAAPSFSKYIAFLQESSVSESMKYWTSRLAGAQPHCLPVSATVGDGQSRDNAHLEMSNLEPLWRFRDRYGITIANILQLAWAFVLAKHSGSRDVVFGYVANGRDAPVDGVSHMAGPLINVMVSRIWLGDKQRSVAKTAEQVQNDFMEAFRYQRVSLADIEQVTGLSERQMLHTVVSIVRDPGSRRSSDAGVSVHGQSATSLAEYDVSLNAACGEDAIKLSLEYSSRYPGSVSAKGLLDNLQKAVLDLAENGEASIEEMGLRC.

Residues 1–12 are compositionally biased toward polar residues; that stretch reads MKHLASSENMPT. Residues 1 to 24 form a disordered region; it reads MKHLASSENMPTPAQDRAPSPSAM. In terms of domain architecture, Carrier 1 spans 19-95; that stretch reads PSPSAMQQEI…ELSRSAECQL (77 aa). Position 56 is an O-(pantetheine 4'-phosphoryl)serine (serine 56). 2 condensation regions span residues 142 to 570 and 178 to 571; these read QDIF…EIEQ and PGLS…IEQL. The segment at 591 to 984 is adenylation 1; the sequence is DEQARLCPDA…GRRDTQVKLR (394 aa). A Carrier 2 domain is found at 1120 to 1197; sequence REATTLQLQI…KLTEKLGVPE (78 aa). Serine 1158 is modified (O-(pantetheine 4'-phosphoryl)serine). 2 condensation regions span residues 1210–1654 and 1689–2125; these read FPLS…KTPS and VEDM…NVTT. An adenylation 2 region spans residues 2171 to 2551; it reads DGDLTYFELD…DRKDWQIKIR (381 aa). Residues 2684-2762 enclose the Carrier 3 domain; it reads LPSSETEKTV…ELAHAIDQRS (79 aa). O-(pantetheine 4'-phosphoryl)serine is present on serine 2721. Residues 2811–3203 form a condensation 4 region; the sequence is VEDIYPCTPL…RFKHIFGQLS (393 aa). The adenylation 3 stretch occupies residues 3255-3647; sequence SATTPDRPAV…GRADQQLKIR (393 aa). One can recognise a Carrier 4 domain in the interval 3783-3857; it reads TRTEELMQSV…QLAQRATTDA (75 aa). 2 condensation regions span residues 3869–4296 and 4340–4757; these read EFRL…TLLC and EDIY…EEMG.

This sequence belongs to the nrps family.

The protein operates within secondary metabolite biosynthesis. Nonribosomal peptide synthetase; part of the gene cluster that mediates the biosynthesis of beauveriolides I and III, cyclodepsipeptides acting as inhibitors of the acyl-CoA:cholesterol acyltransferase. The HR-PKS cm3B initiates the biosynthesis of beauveriolides by iteratively catalyzing the formation of the linear polyketide chain. The ATP-dependent acetyl-CoA ligase cm3D converts the polyketide carboxylic acid to a CoA thioester which id shuttled to the first T domain in the NRPS cm3A by the acetyltransferase cm3C. Cm3A contains 13 domains and assembles the polyketide chain, L-phenylalanine, L-alanine, and D-leucine (or D-allo-isoleucine) to form beauveriolide I (or beauveriolide III). The production of both beauveriolides I and III suggests the substrate adaptability of cm3B, using different amino acids as substrates. In Cordyceps militaris (strain CM01) (Caterpillar fungus), this protein is Nonribosomal peptide synthetase cm3A.